The chain runs to 173 residues: MEVRYKRKVDLCFRPPRTVRAELSRPYGILFSNNAKLLSYLGQFERIITVGDVVTSLVTRSGIRPFLSVVDGKTRRNVSISGERSSEVITNEAGILRFSAMSKIKEIMYGREPRSLFVNGEDDMMVIPIILYGKNGDLVVYGQPNAGAVCLENWEGSRWRVMDIFSKFTAELC.

GTP-binding residues include D52, V53, V54, D71, K73, and D122.

Belongs to the GTP-dependent DPCK family.

The catalysed reaction is 3'-dephospho-CoA + GTP = GDP + CoA + H(+). It functions in the pathway cofactor biosynthesis; coenzyme A biosynthesis. Catalyzes the GTP-dependent phosphorylation of the 3'-hydroxyl group of dephosphocoenzyme A to form coenzyme A (CoA). The chain is GTP-dependent dephospho-CoA kinase from Metallosphaera sedula (strain ATCC 51363 / DSM 5348 / JCM 9185 / NBRC 15509 / TH2).